We begin with the raw amino-acid sequence, 448 residues long: Probable glycine dehydrogenase (decarboxylating) subunit 1 (448 aa).

This sequence belongs to the GcvP family. N-terminal subunit subfamily. The glycine cleavage system is composed of four proteins: P, T, L and H. In this organism, the P 'protein' is a heterodimer of two subunits.

It catalyses the reaction N(6)-[(R)-lipoyl]-L-lysyl-[glycine-cleavage complex H protein] + glycine + H(+) = N(6)-[(R)-S(8)-aminomethyldihydrolipoyl]-L-lysyl-[glycine-cleavage complex H protein] + CO2. The glycine cleavage system catalyzes the degradation of glycine. The P protein binds the alpha-amino group of glycine through its pyridoxal phosphate cofactor; CO(2) is released and the remaining methylamine moiety is then transferred to the lipoamide cofactor of the H protein. The sequence is that of Probable glycine dehydrogenase (decarboxylating) subunit 1 from Staphylococcus epidermidis (strain ATCC 35984 / DSM 28319 / BCRC 17069 / CCUG 31568 / BM 3577 / RP62A).